The sequence spans 569 residues: Sulfite reductase [NADPH] hemoprotein beta-component (569 aa).

4 residues coordinate [4Fe-4S] cluster: Cys-433, Cys-439, Cys-478, and Cys-482. Siroheme is bound at residue Cys-482.

It belongs to the nitrite and sulfite reductase 4Fe-4S domain family. Alpha(8)-beta(8). The alpha component is a flavoprotein, the beta component is a hemoprotein. Requires siroheme as cofactor. [4Fe-4S] cluster is required as a cofactor.

It carries out the reaction hydrogen sulfide + 3 NADP(+) + 3 H2O = sulfite + 3 NADPH + 4 H(+). It participates in sulfur metabolism; hydrogen sulfide biosynthesis; hydrogen sulfide from sulfite (NADPH route): step 1/1. Its function is as follows. Component of the sulfite reductase complex that catalyzes the 6-electron reduction of sulfite to sulfide. This is one of several activities required for the biosynthesis of L-cysteine from sulfate. This Buchnera aphidicola subsp. Acyrthosiphon pisum (strain 5A) protein is Sulfite reductase [NADPH] hemoprotein beta-component.